The primary structure comprises 365 residues: Chorismate synthase (365 aa).

The NADP(+) site is built by Arg-48 and Arg-54. Residues 131 to 133, 243 to 244, Gly-288, 303 to 307, and Arg-329 each bind FMN; these read RSS, NA, and KPTSS.

This sequence belongs to the chorismate synthase family. Homotetramer. Requires FMNH2 as cofactor.

The catalysed reaction is 5-O-(1-carboxyvinyl)-3-phosphoshikimate = chorismate + phosphate. The protein operates within metabolic intermediate biosynthesis; chorismate biosynthesis; chorismate from D-erythrose 4-phosphate and phosphoenolpyruvate: step 7/7. Catalyzes the anti-1,4-elimination of the C-3 phosphate and the C-6 proR hydrogen from 5-enolpyruvylshikimate-3-phosphate (EPSP) to yield chorismate, which is the branch point compound that serves as the starting substrate for the three terminal pathways of aromatic amino acid biosynthesis. This reaction introduces a second double bond into the aromatic ring system. This chain is Chorismate synthase, found in Rhizobium etli (strain CIAT 652).